The sequence spans 264 residues: Thymidylate synthase (264 aa).

A dUMP-binding site is contributed by Arg21. Residue His51 coordinates (6R)-5,10-methylene-5,6,7,8-tetrahydrofolate. DUMP is bound at residue 126 to 127 (RR). Cys146 functions as the Nucleophile in the catalytic mechanism. DUMP is bound by residues 166–169 (RSCD), Asn177, and 207–209 (HLY). Residue Asp169 coordinates (6R)-5,10-methylene-5,6,7,8-tetrahydrofolate. Ala263 contacts (6R)-5,10-methylene-5,6,7,8-tetrahydrofolate.

Belongs to the thymidylate synthase family. Bacterial-type ThyA subfamily. As to quaternary structure, homodimer.

The protein localises to the cytoplasm. It catalyses the reaction dUMP + (6R)-5,10-methylene-5,6,7,8-tetrahydrofolate = 7,8-dihydrofolate + dTMP. It participates in pyrimidine metabolism; dTTP biosynthesis. Functionally, catalyzes the reductive methylation of 2'-deoxyuridine-5'-monophosphate (dUMP) to 2'-deoxythymidine-5'-monophosphate (dTMP) while utilizing 5,10-methylenetetrahydrofolate (mTHF) as the methyl donor and reductant in the reaction, yielding dihydrofolate (DHF) as a by-product. This enzymatic reaction provides an intracellular de novo source of dTMP, an essential precursor for DNA biosynthesis. The polypeptide is Thymidylate synthase (Shigella flexneri serotype 5b (strain 8401)).